A 228-amino-acid chain; its full sequence is Prophenin-2 (228 aa).

An N-terminal signal peptide occupies residues 1-29 (METQRASLCLGRWSLWLLLLALVVPSASA). The propeptide occupies 30–146 (QALSYREAVL…FLRRPRLRRQ (117 aa)). Intrachain disulfides connect Cys85–Cys96 and Cys107–Cys124. 7 consecutive repeat copies span residues 148-157 (FPPPNVPGPR), 158-167 (FPPPNVPGPR), 168-177 (FPPPNFPGPR), 178-187 (FPPPNFPGPR), 188-197 (FPPPNFPGPP), 198-207 (FPPPIFPGPW), and 208-217 (FPPPPPFRPP). The tract at residues 148 to 217 (FPPPNVPGPR…FPPPPPFRPP (70 aa)) is 7 X 10 AA tandem repeats. Disordered stretches follow at residues 167–195 (RFPP…NFPG) and 207–228 (WFPP…PGRR). Pro225 is subject to Proline amide. Residues 226–228 (GRR) constitute a propeptide, removed in mature form.

It belongs to the cathelicidin family.

It localises to the secreted. In terms of biological role, exerts antimicrobial activity. It is more effective against Gram-negative bacteria than Gram-positive bacteria. This chain is Prophenin-2, found in Sus scrofa (Pig).